We begin with the raw amino-acid sequence, 398 residues long: 4-hydroxy-3-methylbut-2-enyl diphosphate reductase (398 aa).

Residue Cys-66 participates in [4Fe-4S] cluster binding. Residue His-96 participates in (2E)-4-hydroxy-3-methylbut-2-enyl diphosphate binding. A dimethylallyl diphosphate-binding site is contributed by His-96. Residue His-96 participates in isopentenyl diphosphate binding. Position 157 (Cys-157) interacts with [4Fe-4S] cluster. His-185 is a binding site for (2E)-4-hydroxy-3-methylbut-2-enyl diphosphate. His-185 contacts dimethylallyl diphosphate. Position 185 (His-185) interacts with isopentenyl diphosphate. Catalysis depends on Glu-187, which acts as the Proton donor. Thr-250 contributes to the (2E)-4-hydroxy-3-methylbut-2-enyl diphosphate binding site. Cys-288 serves as a coordination point for [4Fe-4S] cluster. (2E)-4-hydroxy-3-methylbut-2-enyl diphosphate contacts are provided by Ser-317, Ser-318, Asn-319, and Ser-379. Residues Ser-317, Ser-318, Asn-319, and Ser-379 each contribute to the dimethylallyl diphosphate site. The isopentenyl diphosphate site is built by Ser-317, Ser-318, Asn-319, and Ser-379.

It belongs to the IspH family. Requires [4Fe-4S] cluster as cofactor.

It catalyses the reaction isopentenyl diphosphate + 2 oxidized [2Fe-2S]-[ferredoxin] + H2O = (2E)-4-hydroxy-3-methylbut-2-enyl diphosphate + 2 reduced [2Fe-2S]-[ferredoxin] + 2 H(+). It carries out the reaction dimethylallyl diphosphate + 2 oxidized [2Fe-2S]-[ferredoxin] + H2O = (2E)-4-hydroxy-3-methylbut-2-enyl diphosphate + 2 reduced [2Fe-2S]-[ferredoxin] + 2 H(+). It participates in isoprenoid biosynthesis; dimethylallyl diphosphate biosynthesis; dimethylallyl diphosphate from (2E)-4-hydroxy-3-methylbutenyl diphosphate: step 1/1. It functions in the pathway isoprenoid biosynthesis; isopentenyl diphosphate biosynthesis via DXP pathway; isopentenyl diphosphate from 1-deoxy-D-xylulose 5-phosphate: step 6/6. Its function is as follows. Catalyzes the conversion of 1-hydroxy-2-methyl-2-(E)-butenyl 4-diphosphate (HMBPP) into a mixture of isopentenyl diphosphate (IPP) and dimethylallyl diphosphate (DMAPP). Acts in the terminal step of the DOXP/MEP pathway for isoprenoid precursor biosynthesis. This chain is 4-hydroxy-3-methylbut-2-enyl diphosphate reductase, found in Prochlorococcus marinus (strain MIT 9313).